Here is a 506-residue protein sequence, read N- to C-terminus: UBX domain-containing protein 4 (506 aa).

The tract at residues 1–199 (MLWFQGAIPA…PAEDLTVRVE (199 aa)) is interaction with UBQLN1. The Cytoplasmic portion of the chain corresponds to 1 to 411 (MLWFQGAIPA…VHSSSGDIWT (411 aa)). Positions 110–194 (QQMHSSKGEA…CSNQRPAEDL (85 aa)) are disordered. Composition is skewed to polar residues over residues 120-136 (SVTN…TPSA) and 153-167 (LCET…SDTA). Positions 313–391 (DRSTIARIQF…ELAPSASVVL (79 aa)) constitute a UBX domain. Residues 412–432 (LLGTVLYPFLAIWRLISNFLF) lie within the membrane without spanning it. The Cytoplasmic portion of the chain corresponds to 433-506 (SNPPPAQTSA…TWNGNSTQQM (74 aa)). Residues 437–506 (PAQTSARATS…TWNGNSTQQM (70 aa)) are disordered. Over residues 444–456 (ATSTEPSNSASSS) the composition is skewed to low complexity. The segment covering 457–489 (KSEKREPVRKRMLEKRGEDFKKEGKIYRLRTQD) has biased composition (basic and acidic residues). The residue at position 487 (T487) is a Phosphothreonine. The span at 496 to 506 (NTWNGNSTQQM) shows a compositional bias: polar residues.

Directly interacts with VCP. Interacts with UBQLN1. Forms a complex with VCP and UBQLN1. As to expression, expressed in many tissues, including brain, heart, kidney, liver, muscle and spleen (at protein level).

It is found in the endoplasmic reticulum membrane. The protein localises to the nucleus envelope. Functionally, involved in endoplasmic reticulum-associated protein degradation (ERAD). Acts as a platform to recruit both UBQLN1 and VCP to the ER during ERAD. In Mus musculus (Mouse), this protein is UBX domain-containing protein 4 (Ubxn4).